The sequence spans 3658 residues: E3 ubiquitin-protein ligase UPL2 (3658 aa).

A compositionally biased stretch (basic and acidic residues) spans 884–893 (DEKKSVDRAS). Residues 884–914 (DEKKSVDRASDNSVSASSSTAERESDEDSSN) form a disordered region. Residues 894 to 903 (DNSVSASSST) are compositionally biased toward low complexity. Residues 1271-1312 (QPDEAIVGMIVEMGFSRSRAEDALRRVGTNSVEMAMDWLFTN) enclose the UBA domain. The UIM domain occupies 1318-1337 (QEDDELAQALALSLGNSSET). 9 disordered regions span residues 1331–1360 (LGNS…KEPP), 1702–1733 (VSGS…SKSH), 2004–2038 (AEQL…VDEL), 2052–2072 (VDNG…RGSS), 2113–2204 (HVED…DDMV), 2293–2313 (PLFS…SAGS), 2417–2487 (ERET…EGGG), 2503–2591 (SAQG…PEVN), and 2958–2987 (SPSS…AESE). Basic and acidic residues predominate over residues 1338–1347 (PKLEDTEKPV). Residues 2007-2027 (LKSEVPNEQKNTDSDERHDSH) are compositionally biased toward basic and acidic residues. The segment covering 2028-2038 (GTSTSTEVDEL) has biased composition (polar residues). Acidic residues-rich tracts occupy residues 2117–2144 (RADD…DSVE) and 2156–2204 (DVED…DDMV). A compositionally biased stretch (polar residues) spans 2297 to 2313 (RPSQTGNTASVSASAGS). A compositionally biased stretch (low complexity) spans 2422–2431 (TTEVQEQQQP). The span at 2503–2518 (SAQGQSDTSGIQNVSV) shows a compositional bias: polar residues. Residue Ser-2582 is modified to Phosphoserine. One can recognise an HECT domain in the interval 3317–3658 (SPQDLKGRLN…HEANEGFGFA (342 aa)). The active-site Glycyl thioester intermediate is Cys-3625.

This sequence belongs to the UPL family. TOM1/PTR1 subfamily. Widely expressed. Expressed in root, stem, cauline and rosette leaf, seedling and flower (at protein level).

The catalysed reaction is S-ubiquitinyl-[E2 ubiquitin-conjugating enzyme]-L-cysteine + [acceptor protein]-L-lysine = [E2 ubiquitin-conjugating enzyme]-L-cysteine + N(6)-ubiquitinyl-[acceptor protein]-L-lysine.. Its pathway is protein modification; protein ubiquitination. Its function is as follows. Probable E3 ubiquitin-protein ligase which mediates ubiquitination and subsequent proteasomal degradation of target proteins. The protein is E3 ubiquitin-protein ligase UPL2 (UPL2) of Arabidopsis thaliana (Mouse-ear cress).